The following is a 45-amino-acid chain: Alpha-conotoxin-like Lp1.10 (45 aa).

A propeptide spanning residues 1-27 (VVLGPASDGRNAAANVKAPDLIALTVR) is cleaved from the precursor. 2 cysteine pairs are disulfide-bonded: Cys-30–Cys-36 and Cys-31–Cys-44. The interval 32–34 (HNA) is lacks the Ser-Xaa-Pro motif that is crucial for potent interaction with nAChR. The residue at position 44 (Cys-44) is a Cysteine amide.

This sequence belongs to the conotoxin A superfamily. In terms of tissue distribution, expressed by the venom duct.

The protein resides in the secreted. Its function is as follows. Alpha-conotoxins act on postsynaptic membranes, they bind to the nicotinic acetylcholine receptors (nAChR) and thus inhibit them. Has possibly a distinct nAChR binding mode from other alpha-conotoxins, due to a different three residue motif (lacks the Ser-Xaa-Pro motif). This is Alpha-conotoxin-like Lp1.10 from Conus leopardus (Leopard cone).